A 460-amino-acid chain; its full sequence is MFS-type transporter PUL3 (460 aa).

8 consecutive transmembrane segments (helical) span residues 16 to 36, 50 to 70, 81 to 101, 113 to 133, 151 to 171, 181 to 201, 240 to 260, and 271 to 291; these read AVTL…SSVV, YLFI…FIIG, WVII…SCAG, IICG…TAIS, GICM…DFTV, APTF…MFVL, MFLS…FLTL, and VAFM…PDLV. Residues 300–323 are disordered; it reads PSTQDETDTSDNDKIEKEESEQKS. The segment covering 310–323 has biased composition (basic and acidic residues); sequence DNDKIEKEESEQKS. 4 consecutive transmembrane segments (helical) span residues 333–353, 369–389, 408–428, and 433–453; these read VSLT…MIGA, IFFT…GSSV, FIGA…AALY, and GLPI…PSLV.

This sequence belongs to the major facilitator superfamily. TCR/Tet family.

The protein resides in the cell membrane. MFS-type transporer required for the uptake of iron via the uptake of the siderophore pulcherrimin-iron complex. This is MFS-type transporter PUL3 from Kluyveromyces lactis (strain ATCC 8585 / CBS 2359 / DSM 70799 / NBRC 1267 / NRRL Y-1140 / WM37) (Yeast).